A 248-amino-acid polypeptide reads, in one-letter code: Ubiquinone/menaquinone biosynthesis C-methyltransferase UbiE (248 aa).

S-adenosyl-L-methionine is bound by residues Ser68, Asp92, and 120 to 121; that span reads NA.

It belongs to the class I-like SAM-binding methyltransferase superfamily. MenG/UbiE family.

It carries out the reaction a 2-demethylmenaquinol + S-adenosyl-L-methionine = a menaquinol + S-adenosyl-L-homocysteine + H(+). It catalyses the reaction a 2-methoxy-6-(all-trans-polyprenyl)benzene-1,4-diol + S-adenosyl-L-methionine = a 5-methoxy-2-methyl-3-(all-trans-polyprenyl)benzene-1,4-diol + S-adenosyl-L-homocysteine + H(+). It functions in the pathway quinol/quinone metabolism; menaquinone biosynthesis; menaquinol from 1,4-dihydroxy-2-naphthoate: step 2/2. The protein operates within cofactor biosynthesis; ubiquinone biosynthesis. Its function is as follows. Methyltransferase required for the conversion of demethylmenaquinol (DMKH2) to menaquinol (MKH2) and the conversion of 2-polyprenyl-6-methoxy-1,4-benzoquinol (DDMQH2) to 2-polyprenyl-3-methyl-6-methoxy-1,4-benzoquinol (DMQH2). The protein is Ubiquinone/menaquinone biosynthesis C-methyltransferase UbiE of Rickettsia prowazekii (strain Madrid E).